Reading from the N-terminus, the 130-residue chain is Small ribosomal subunit protein uS11 (130 aa).

Belongs to the universal ribosomal protein uS11 family. As to quaternary structure, part of the 30S ribosomal subunit. Interacts with proteins S7 and S18. Binds to IF-3.

Its function is as follows. Located on the platform of the 30S subunit, it bridges several disparate RNA helices of the 16S rRNA. Forms part of the Shine-Dalgarno cleft in the 70S ribosome. The polypeptide is Small ribosomal subunit protein uS11 (Bdellovibrio bacteriovorus (strain ATCC 15356 / DSM 50701 / NCIMB 9529 / HD100)).